A 358-amino-acid polypeptide reads, in one-letter code: Trace amine-associated receptor 7h (358 aa).

The Extracellular portion of the chain corresponds to 1–47 (MATDDESFPWDQDSILSRDLLSALSPQLCYENLNRSCVRSPYSPGPR). Residue N34 is glycosylated (N-linked (GlcNAc...) asparagine). 2 cysteine pairs are disulfide-bonded: C37–C201 and C120–C205. The chain crosses the membrane as a helical span at residues 48-68 (LILYAVFGFGAVLAVCGNLLV). At 69–83 (MTSILHFRQLHSPAN) the chain is on the cytoplasmic side. The chain crosses the membrane as a helical span at residues 84 to 104 (FLVASLACADLLVGLTVMPFS). Topologically, residues 105-125 (MVRSVEGCWYFGDSYCKLHTS) are extracellular. Residues 126 to 143 (FDMSFCCSSLLHLCFISV) traverse the membrane as a helical segment. Over 144 to 166 (DRYIAVSDPLIYPIRFTASVSGK) the chain is Cytoplasmic. The chain crosses the membrane as a helical span at residues 167-187 (CITFSWFLSIIYGFSLIYTGA). Over 188–217 (SEAGLKDLVSALSCVGGCQIPMNQSCVLIN) the chain is Extracellular. An N-linked (GlcNAc...) asparagine glycan is attached at N210. The helical transmembrane segment at 218-238 (FLLFLVPTLVMMTVYSKIFLI) threads the bilayer. The Cytoplasmic portion of the chain corresponds to 239–274 (AKQQAQNMEKMSKQTTRASDSYKDRVAKRERKAAKT). A helical transmembrane segment spans residues 275 to 295 (LGIAVAAFLLSWLPYLIDSII). Topologically, residues 296 to 309 (DAFLGFITPSYVYE) are extracellular. The helical transmembrane segment at 310–333 (ILVWIVYYNSAMNPLIYAFFYPWF) threads the bilayer. Over 334–358 (RNAIKLIVTGKILKQNSSTTNLFSE) the chain is Cytoplasmic.

It belongs to the G-protein coupled receptor 1 family.

It localises to the cell membrane. Olfactory receptor specific for N,N-dimethylalkylamines trace amines. Trace amine compounds are enriched in animal body fluids and act on trace amine-associated receptors (TAARs) to elicit both intraspecific and interspecific innate behaviors. Ligand-binding causes a conformation change that triggers signaling via G(s)-class of G alpha proteins (GNAL or GNAS). This Rattus norvegicus (Rat) protein is Trace amine-associated receptor 7h.